The chain runs to 237 residues: Ubiquinone biosynthesis O-methyltransferase (237 aa).

Residues Arg-38, Gly-57, Asp-78, and Met-122 each contribute to the S-adenosyl-L-methionine site.

Belongs to the methyltransferase superfamily. UbiG/COQ3 family.

The catalysed reaction is a 3-demethylubiquinol + S-adenosyl-L-methionine = a ubiquinol + S-adenosyl-L-homocysteine + H(+). The enzyme catalyses a 3-(all-trans-polyprenyl)benzene-1,2-diol + S-adenosyl-L-methionine = a 2-methoxy-6-(all-trans-polyprenyl)phenol + S-adenosyl-L-homocysteine + H(+). Its pathway is cofactor biosynthesis; ubiquinone biosynthesis. Functionally, O-methyltransferase that catalyzes the 2 O-methylation steps in the ubiquinone biosynthetic pathway. In Methylococcus capsulatus (strain ATCC 33009 / NCIMB 11132 / Bath), this protein is Ubiquinone biosynthesis O-methyltransferase.